A 385-amino-acid chain; its full sequence is Polyketide synthase 2 (385 aa).

Cys-157 is a catalytic residue.

Belongs to the thiolase-like superfamily. Chalcone/stilbene synthases family. Expressed in leaves and glandular trichomes.

The protein resides in the cytoplasm. Its function is as follows. Polyketide synthase responsible for the biosynthesis of secondary metabolites. The polypeptide is Polyketide synthase 2 (PKSG2) (Cannabis sativa (Hemp)).